A 324-amino-acid chain; its full sequence is NADH-ubiquinone oxidoreductase chain 1 (324 aa).

8 consecutive transmembrane segments (helical) span residues 9–29 (LINP…LTLI), 75–95 (FLFL…WAPM), 106–126 (LGIL…LGSG), 146–166 (ISYE…SGGY), 177–197 (SIWL…STLA), 228–248 (LFFL…AVLF), 259–279 (ELTT…FLWV), and 299–319 (FLPL…ALAG).

Belongs to the complex I subunit 1 family.

It is found in the mitochondrion inner membrane. The catalysed reaction is a ubiquinone + NADH + 5 H(+)(in) = a ubiquinol + NAD(+) + 4 H(+)(out). Functionally, core subunit of the mitochondrial membrane respiratory chain NADH dehydrogenase (Complex I) that is believed to belong to the minimal assembly required for catalysis. Complex I functions in the transfer of electrons from NADH to the respiratory chain. The immediate electron acceptor for the enzyme is believed to be ubiquinone. The polypeptide is NADH-ubiquinone oxidoreductase chain 1 (MT-ND1) (Cyprinus carpio (Common carp)).